Consider the following 128-residue polypeptide: LIM domain-containing protein 2 (128 aa).

At Met1 the chain carries N-acetylmethionine. The tract at residues 1–25 is disordered; the sequence is MFQAAGAAQATPSHEAKGSSGSSTV. Residues 39-99 form the LIM zinc-binding domain; it reads ETCAACQKTV…RPHFQQLFKS (61 aa). Residues Cys41, Cys44, His62, Cys65, Cys68, Cys71, Cys89, and His92 each contribute to the Zn(2+) site.

As to quaternary structure, interacts with ILK.

The protein resides in the cytoplasm. The protein localises to the nucleus. In terms of biological role, acts as an activator of the protein-kinase ILK, thereby regulating cell motility. The sequence is that of LIM domain-containing protein 2 from Mus musculus (Mouse).